The primary structure comprises 468 residues: ATP synthase subunit beta (468 aa).

153–160 is an ATP binding site; sequence GGAGVGKT.

This sequence belongs to the ATPase alpha/beta chains family. F-type ATPases have 2 components, CF(1) - the catalytic core - and CF(0) - the membrane proton channel. CF(1) has five subunits: alpha(3), beta(3), gamma(1), delta(1), epsilon(1). CF(0) has three main subunits: a(1), b(2) and c(9-12). The alpha and beta chains form an alternating ring which encloses part of the gamma chain. CF(1) is attached to CF(0) by a central stalk formed by the gamma and epsilon chains, while a peripheral stalk is formed by the delta and b chains.

The protein resides in the cell membrane. It catalyses the reaction ATP + H2O + 4 H(+)(in) = ADP + phosphate + 5 H(+)(out). Functionally, produces ATP from ADP in the presence of a proton gradient across the membrane. The catalytic sites are hosted primarily by the beta subunits. The protein is ATP synthase subunit beta of Ligilactobacillus salivarius (strain UCC118) (Lactobacillus salivarius).